The chain runs to 472 residues: Ras-GEF domain-containing family member 1B (472 aa).

Residues 34 to 164 (QDNNLLSGSL…IIQNLIRKLA (131 aa)) form the N-terminal Ras-GEF domain. Positions 204–452 (DPYTVAQQLT…YLASYESEGP (249 aa)) constitute a Ras-GEF domain.

In terms of biological role, guanine nucleotide exchange factor (GEF) with specificity for rap2a and other Ras family proteins (in vitro). In Xenopus tropicalis (Western clawed frog), this protein is Ras-GEF domain-containing family member 1B (rasgef1b).